The following is a 291-amino-acid chain: Bis(5'-nucleosyl)-tetraphosphatase, symmetrical (291 aa).

The protein belongs to the Ap4A hydrolase family.

It catalyses the reaction P(1),P(4)-bis(5'-adenosyl) tetraphosphate + H2O = 2 ADP + 2 H(+). In terms of biological role, hydrolyzes diadenosine 5',5'''-P1,P4-tetraphosphate to yield ADP. The polypeptide is Bis(5'-nucleosyl)-tetraphosphatase, symmetrical (Coxiella burnetii (strain Dugway 5J108-111)).